The following is a 273-amino-acid chain: Bis(5'-nucleosyl)-tetraphosphatase, symmetrical (273 aa).

The protein belongs to the Ap4A hydrolase family.

The catalysed reaction is P(1),P(4)-bis(5'-adenosyl) tetraphosphate + H2O = 2 ADP + 2 H(+). In terms of biological role, hydrolyzes diadenosine 5',5'''-P1,P4-tetraphosphate to yield ADP. This is Bis(5'-nucleosyl)-tetraphosphatase, symmetrical from Aeromonas salmonicida (strain A449).